Here is a 307-residue protein sequence, read N- to C-terminus: Aspartate carbamoyltransferase catalytic subunit (307 aa).

Carbamoyl phosphate is bound by residues Arg-58 and Thr-59. Residue Lys-86 coordinates L-aspartate. Residues Arg-108, His-136, and Gln-139 each coordinate carbamoyl phosphate. Residues Arg-169 and Arg-223 each contribute to the L-aspartate site. Carbamoyl phosphate contacts are provided by Gly-264 and Pro-265.

It belongs to the aspartate/ornithine carbamoyltransferase superfamily. ATCase family. Heterododecamer (2C3:3R2) of six catalytic PyrB chains organized as two trimers (C3), and six regulatory PyrI chains organized as three dimers (R2).

The enzyme catalyses carbamoyl phosphate + L-aspartate = N-carbamoyl-L-aspartate + phosphate + H(+). The protein operates within pyrimidine metabolism; UMP biosynthesis via de novo pathway; (S)-dihydroorotate from bicarbonate: step 2/3. Catalyzes the condensation of carbamoyl phosphate and aspartate to form carbamoyl aspartate and inorganic phosphate, the committed step in the de novo pyrimidine nucleotide biosynthesis pathway. The polypeptide is Aspartate carbamoyltransferase catalytic subunit (Moorella thermoacetica (strain ATCC 39073 / JCM 9320)).